The following is a 500-amino-acid chain: Matrilin-1 (500 aa).

A signal peptide spans 1-29 (MKVTSGPAFALCSLLLLLLLLLQVPDSLS). The 197-residue stretch at 30-226 (LVPQPRGHLC…AKKFQEAFCV (197 aa)) folds into the VWFA 1 domain. Asn-80 carries N-linked (GlcNAc...) asparagine glycosylation. One can recognise an EGF-like domain in the interval 227-267 (VSDLCATGDHDCEQLCVSSPGSYTCACHEGFTLNSDGKTCN). 3 cysteine pairs are disulfide-bonded: Cys-231–Cys-242, Cys-238–Cys-251, and Cys-253–Cys-266. The VWFA 2 domain occupies 268–457 (VCRGGGSGSA…GKKLQKQICV (190 aa)). The N-linked (GlcNAc...) asparagine glycan is linked to Asn-348. Residues 471–499 (EAKVEGLLQALTRKLEAVSGRLAVLENRI) adopt a coiled-coil conformation.

Homotrimer. Part of a complex composed of MATN1 (via VWFA1 domain), type 2 collagens and type 6 collagens. Forms a complex (via covalent bonds) with ACAN; the interaction increases in abundance with increasing age of the organism via an increase in occupancy of MATN1 binding sites. Interacts with COMP. In terms of processing, N-glycosylated; reduces binding affinity for type 2 collagens. As to expression, expressed in femoral head articular cartilage. Expressed in the trachea and extraskeletal tissue around the eye.

It localises to the secreted. The protein resides in the extracellular space. The protein localises to the extracellular matrix. A major component of the extracellular matrix of non-articular cartilage. Binds to type 2 collagens and forms long concatenated protein networks as part of the extracellular matrix. Required for the network-like organization and bundling of collagen fibrils surrounding chondrocytes in the zones of maturation and hypertrophy. Required for mechanotransduction and adaption to mechanical loading in cartilage chondrocytes, resulting in an increase in expression of the extracellular matrix components ACAN and COL2A1. Acts as a moderator of angiogenesis in response to injury. The polypeptide is Matrilin-1 (Mus musculus (Mouse)).